The primary structure comprises 404 residues: Cytoplasmic tRNA 2-thiolation protein 2 (404 aa).

The protein belongs to the CTU2/NCS2 family.

Its subcellular location is the cytoplasm. It functions in the pathway tRNA modification; 5-methoxycarbonylmethyl-2-thiouridine-tRNA biosynthesis. Its function is as follows. Plays a central role in 2-thiolation of mcm(5)S(2)U at tRNA wobble positions of tRNA(Lys), tRNA(Glu) and tRNA(Gln). May act by forming a heterodimer with NCS6/CTU1 that ligates sulfur from thiocarboxylated URM1 onto the uridine of tRNAs at wobble position. The sequence is that of Cytoplasmic tRNA 2-thiolation protein 2 from Drosophila erecta (Fruit fly).